The following is a 336-amino-acid chain: DNA topoisomerase 1B (336 aa).

In terms of domain architecture, Topo IB-type catalytic spans 79–336 (EIHIQGAEKE…KSYRKDVLGE (258 aa)). Tyrosine 294 serves as the catalytic O-(3'-phospho-DNA)-tyrosine intermediate.

Belongs to the type IB topoisomerase family. As to quaternary structure, monomer.

The protein localises to the virion. The enzyme catalyses ATP-independent breakage of single-stranded DNA, followed by passage and rejoining.. Functionally, releases the supercoiling and torsional tension of DNA introduced during the DNA replication and transcription by transiently cleaving and rejoining one strand of the DNA duplex. Introduces a single-strand break via transesterification at a target site in duplex DNA. The scissile phosphodiester is attacked by the catalytic tyrosine of the enzyme, resulting in the formation of a DNA-(3'-phosphotyrosyl)-enzyme intermediate and the expulsion of a 5'-OH DNA strand. The free DNA strand then undergoes passage around the unbroken strand thus removing DNA supercoils. Finally, in the religation step, the DNA 5'-OH attacks the covalent intermediate to expel the active-site tyrosine and restore the DNA phosphodiester backbone. Cleaves DNA after CCCTT sequence. This Acanthamoeba polyphaga mimivirus (APMV) protein is DNA topoisomerase 1B (TOP1E).